A 51-amino-acid polypeptide reads, in one-letter code: Large ribosomal subunit protein eL39 (51 aa).

Residues 1-22 (MPSQKSFRTKQKLAKAQKQNRP) are disordered.

Belongs to the eukaryotic ribosomal protein eL39 family. Interacts with YIH1.

This is Large ribosomal subunit protein eL39 (RPL39) from Debaryomyces hansenii (strain ATCC 36239 / CBS 767 / BCRC 21394 / JCM 1990 / NBRC 0083 / IGC 2968) (Yeast).